The primary structure comprises 440 residues: Glucose-1-phosphate adenylyltransferase (440 aa).

Alpha-D-glucose 1-phosphate-binding positions include Tyr-125, Gly-190, 205 to 206, and Ser-223; that span reads EK.

This sequence belongs to the bacterial/plant glucose-1-phosphate adenylyltransferase family. As to quaternary structure, homotetramer.

It catalyses the reaction alpha-D-glucose 1-phosphate + ATP + H(+) = ADP-alpha-D-glucose + diphosphate. The protein operates within glycan biosynthesis; glycogen biosynthesis. Functionally, involved in the biosynthesis of ADP-glucose, a building block required for the elongation reactions to produce glycogen. Catalyzes the reaction between ATP and alpha-D-glucose 1-phosphate (G1P) to produce pyrophosphate and ADP-Glc. The sequence is that of Glucose-1-phosphate adenylyltransferase from Dechloromonas aromatica (strain RCB).